Here is an 88-residue protein sequence, read N- to C-terminus: Small ribosomal subunit protein bS16c (88 aa).

Belongs to the bacterial ribosomal protein bS16 family.

The protein resides in the plastid. Its subcellular location is the chloroplast. This is Small ribosomal subunit protein bS16c from Gossypium barbadense (Sea Island cotton).